The primary structure comprises 467 residues: Probable glutamate decarboxylase gamma (467 aa).

The residue at position 278 (lysine 278) is an N6-(pyridoxal phosphate)lysine.

This sequence belongs to the group II decarboxylase family. It depends on pyridoxal 5'-phosphate as a cofactor.

It carries out the reaction L-glutamate + H(+) = 4-aminobutanoate + CO2. This is Probable glutamate decarboxylase gamma from Listeria monocytogenes serovar 1/2a (strain ATCC BAA-679 / EGD-e).